The chain runs to 658 residues: MMPRLLLRDWPRCPSLVLGAPSRPLSAVSGPAEYLQHSIVPTMHYQDSLPRLPIPKLEDTMKRYLSAQKPLLNDSQFRKTEVLCKDFENGIGKELHAHLLAQDKQNKHTSYISGPWFDMYLTARDSVVLNFNPFMAFNPDPKSEYNDQLTRATNLTVSAVRFLKTLRAGLLEPEVFHLNPARSDTDAFKRLIRFVPSSLSWYGAYLVNAYPLDMSQYFRLFNSTRIPKPSRDELFTDTKARHLLVLRKGHFYVFDVLDQDGNIVNPSEIQAHLKYILSDSSPVPEFPLAYLTSENRDVWAELRQKLIHGGNEETLRKVDSAVFCLCLDDFPMKDLVHLSHTMLHGDGTNRWFDKSFNLIVAKDGTAAVHFEHAWGDGVAVLRFFNEVFRDSTQTPAIAPQSQPAATDSSVSVQKLSFKLSSALKAGVTAAKEKFDATMKTLTIDAIQFQRGGKEFLKKKKLSPDAVAQLAFQMAFLRQYGQTVATYESCSTAAFKHGRTETIRPASIFTKRCSEAFVREPSKHSVGELQHMMAECSKYHGQLTKEAAMGQGFDRHLFALRYLAAARGVTLPELYQDPAYQRINHNILSTSTLSSPAVSLGGFAPVVPDGFGIAYAVHDDWIGCNVSSYSGRNAREFLHCVQKCLEDMFDALEGKAIKT.

A mitochondrion-targeting transit peptide spans 1-25 (MMPRLLLRDWPRCPSLVLGAPSRPL). The Mitochondrial matrix portion of the chain corresponds to 26–178 (SAVSGPAEYL…GLLEPEVFHL (153 aa)). The residue at position 69 (Lys69) is an N6-succinyllysine. Lys79 is modified (N6-acetyllysine). Lys85 bears the N6-succinyllysine mark. Residues 179–208 (NPARSDTDAFKRLIRFVPSSLSWYGAYLVN) constitute an intramembrane region (note=Mitochondrial inner membrane). Residues 209-658 (AYPLDMSQYF…DALEGKAIKT (450 aa)) are Mitochondrial matrix-facing. At Lys239 the chain carries N6-acetyllysine; alternate. An N6-succinyllysine; alternate modification is found at Lys239. Lys305 carries the post-translational modification N6-acetyllysine. The active-site Proton acceptor is the His372. Lys418 is subject to N6-acetyllysine; alternate. N6-succinyllysine; alternate is present on Lys418. An N6-succinyllysine mark is found at Lys424 and Lys439. 452 to 464 (GKEFLKKKKLSPD) provides a ligand contact to CoA. The (R)-carnitine site is built by Tyr486, Ser488, and Thr499. N6-acetyllysine; alternate is present on residues Lys510 and Lys544. Residues Lys510 and Lys544 each carry the N6-succinyllysine; alternate modification.

The protein belongs to the carnitine/choline acetyltransferase family.

The protein localises to the mitochondrion inner membrane. It catalyses the reaction (R)-carnitine + hexadecanoyl-CoA = O-hexadecanoyl-(R)-carnitine + CoA. The catalysed reaction is octanoyl-CoA + (R)-carnitine = O-octanoyl-(R)-carnitine + CoA. It carries out the reaction decanoyl-CoA + (R)-carnitine = O-decanoyl-(R)-carnitine + CoA. The enzyme catalyses dodecanoyl-CoA + (R)-carnitine = O-dodecanoyl-R-carnitine + CoA. It catalyses the reaction tetradecanoyl-CoA + (R)-carnitine = O-tetradecanoyl-(R)-carnitine + CoA. The catalysed reaction is (R)-carnitine + octadecanoyl-CoA = O-octadecanoyl-(R)-carnitine + CoA. It carries out the reaction eicosanoyl-CoA + (R)-carnitine = O-eicosanoyl-(R)-carnitine + CoA. The enzyme catalyses (9Z)-tetradecenoyl-CoA + (R)-carnitine = O-(9Z)-tetradecenoyl-(R)-carnitine + CoA. It catalyses the reaction (5Z)-tetradecenoyl-CoA + (R)-carnitine = O-(5Z)-tetradecenoyl-(R)-carnitine + CoA. The catalysed reaction is (R)-carnitine + (9Z)-octadecenoyl-CoA = O-(9Z)-octadecenoyl-(R)-carnitine + CoA. It carries out the reaction 4,8-dimethylnonanoyl-CoA + (R)-carnitine = O-4,8-dimethylnonanoyl-(R)-carnitine + CoA. Its pathway is lipid metabolism; fatty acid beta-oxidation. Involved in the intramitochondrial synthesis of acylcarnitines from accumulated acyl-CoA metabolites. Reconverts acylcarnitines back into the respective acyl-CoA esters that can then undergo beta-oxidation, an essential step for the mitochondrial uptake of long-chain fatty acids and their subsequent beta-oxidation in the mitochondrion. Active with medium (C8-C12) and long-chain (C14-C18) acyl-CoA esters. The chain is Carnitine O-palmitoyltransferase 2, mitochondrial from Mus musculus (Mouse).